We begin with the raw amino-acid sequence, 231 residues long: Eukaryotic translation initiation factor 4E-1 (231 aa).

EIF4G-binding regions lie at residues 56 to 59 (HPLE) and 66 to 102 (FDNS…NNIH). MRNA contacts are provided by residues 74–79 (RQTAWG), Lys106, and 124–125 (WE). Cys129 and Cys167 are oxidised to a cystine. An EIF4G-binding region spans residues 150-159 (YTLLAMIGHQ). Residues 174-179 (RAKGEK) and 219-223 (KRLDR) each bind mRNA.

This sequence belongs to the eukaryotic initiation factor 4E family. EIF4F is a multi-subunit complex, the composition of which varies with external and internal environmental conditions. It is composed of at least EIF4A, EIF4E and EIF4G. EIF4E is also known to interact with other partners. In higher plants two isoforms of EIF4F have been identified, named isoform EIF4F and isoform EIF(iso)4F. Isoform EIF4F has subunits p220 and p26, whereas isoform EIF(iso)4F has subunits p82 and p28. In terms of assembly, (Microbial infection) Interacts with potyvirus viral genome-linked protein (VPg); this interaction is possible in susceptible hosts but impaired in resistant plants. According to the redox status, the Cys-129-Cys-167 disulfide bridge may have a role in regulating protein function by affecting its ability to bind capped mRNA.

The protein resides in the nucleus. It is found in the cytoplasm. Component of the protein complex eIF4F, which is involved in the recognition of the mRNA cap, ATP-dependent unwinding of 5'-terminal secondary structure and recruitment of mRNA to the ribosome. Recognizes and binds the 7-methylguanosine-containing mRNA cap during an early step in the initiation of protein synthesis and facilitates ribosome binding by inducing the unwinding of the mRNAs secondary structures. Key component of recessive resistance to potyviruses. In terms of biological role, (Microbial infection) Susceptibility host factor required for viral infection (e.g. pepper mottle virus (PepMoV), potato virus Y (PVY) and tobacco etch virus (TEV)) by recruiting viral RNAs to the host ribosomal complex via an interaction with viral genome-linked protein (VPg). This chain is Eukaryotic translation initiation factor 4E-1, found in Solanum habrochaites (Wild tomato).